The chain runs to 389 residues: Lipid-A-disaccharide synthase (389 aa).

The protein belongs to the LpxB family.

It catalyses the reaction a lipid X + a UDP-2-N,3-O-bis[(3R)-3-hydroxyacyl]-alpha-D-glucosamine = a lipid A disaccharide + UDP + H(+). It participates in bacterial outer membrane biogenesis; LPS lipid A biosynthesis. Its function is as follows. Condensation of UDP-2,3-diacylglucosamine and 2,3-diacylglucosamine-1-phosphate to form lipid A disaccharide, a precursor of lipid A, a phosphorylated glycolipid that anchors the lipopolysaccharide to the outer membrane of the cell. The chain is Lipid-A-disaccharide synthase from Albidiferax ferrireducens (strain ATCC BAA-621 / DSM 15236 / T118) (Rhodoferax ferrireducens).